The primary structure comprises 428 residues: Enolase 1 (428 aa).

Residue glutamine 167 coordinates (2R)-2-phosphoglycerate. Glutamate 209 serves as the catalytic Proton donor. Aspartate 246, glutamate 288, and aspartate 315 together coordinate Mg(2+). Positions 340, 369, 370, and 391 each coordinate (2R)-2-phosphoglycerate. The active-site Proton acceptor is the lysine 340.

The protein belongs to the enolase family. In terms of assembly, component of the RNA degradosome, a multiprotein complex involved in RNA processing and mRNA degradation. Requires Mg(2+) as cofactor.

Its subcellular location is the cytoplasm. It localises to the secreted. The protein localises to the cell surface. It catalyses the reaction (2R)-2-phosphoglycerate = phosphoenolpyruvate + H2O. It functions in the pathway carbohydrate degradation; glycolysis; pyruvate from D-glyceraldehyde 3-phosphate: step 4/5. Catalyzes the reversible conversion of 2-phosphoglycerate (2-PG) into phosphoenolpyruvate (PEP). It is essential for the degradation of carbohydrates via glycolysis. The protein is Enolase 1 of Pseudomonas syringae pv. syringae (strain B728a).